The primary structure comprises 228 residues: 5'-methylthioadenosine/S-adenosylhomocysteine nucleosidase (228 aa).

The active-site Proton acceptor is Glu-11. Substrate contacts are provided by residues Gly-77, Ile-151, and 172–173 (ME). The Proton donor role is filled by Asp-196.

The protein belongs to the PNP/UDP phosphorylase family. MtnN subfamily.

The enzyme catalyses S-adenosyl-L-homocysteine + H2O = S-(5-deoxy-D-ribos-5-yl)-L-homocysteine + adenine. The catalysed reaction is S-methyl-5'-thioadenosine + H2O = 5-(methylsulfanyl)-D-ribose + adenine. It carries out the reaction 5'-deoxyadenosine + H2O = 5-deoxy-D-ribose + adenine. Its pathway is amino-acid biosynthesis; L-methionine biosynthesis via salvage pathway; S-methyl-5-thio-alpha-D-ribose 1-phosphate from S-methyl-5'-thioadenosine (hydrolase route): step 1/2. Its function is as follows. Catalyzes the irreversible cleavage of the glycosidic bond in both 5'-methylthioadenosine (MTA) and S-adenosylhomocysteine (SAH/AdoHcy) to adenine and the corresponding thioribose, 5'-methylthioribose and S-ribosylhomocysteine, respectively. Also cleaves 5'-deoxyadenosine, a toxic by-product of radical S-adenosylmethionine (SAM) enzymes, into 5-deoxyribose and adenine. This chain is 5'-methylthioadenosine/S-adenosylhomocysteine nucleosidase, found in Staphylococcus aureus (strain bovine RF122 / ET3-1).